The sequence spans 112 residues: Nitrogen regulatory protein GlnK2 (112 aa).

ADP contacts are provided by residues T29, 37 to 39 (GVQ), V64, and 87 to 90 (GDGK). ATP contacts are provided by residues T29, 37–39 (GVQ), V64, and 87–90 (GDGK).

Belongs to the P(II) protein family. In terms of assembly, homotrimer. Interacts and forms a complex with Amt2.

It localises to the cytoplasm. In terms of biological role, involved in the regulation of nitrogen metabolism. Regulates the activity of its targets by protein-protein interaction in response to the nitrogen status of the cell. Regulates the activity of the ammonia channel Amt2 via direct interaction. The protein is Nitrogen regulatory protein GlnK2 of Methanocaldococcus jannaschii (strain ATCC 43067 / DSM 2661 / JAL-1 / JCM 10045 / NBRC 100440) (Methanococcus jannaschii).